The sequence spans 395 residues: LIM/homeobox protein Lhx3 (395 aa).

LIM zinc-binding domains follow at residues 28–78 (CAGC…CKED) and 87–141 (CAAC…CKAD). The homeobox DNA-binding region spans 154 to 213 (AKRPRTTITAKQLETLKNAYNNSPKPARHVREQLSSETGLDMRVVQVWFQNRRAKEKRLK). Disordered regions lie at residues 209 to 325 (EKRL…LQAL) and 348 to 395 (GGQG…HAQF). Over residues 257-276 (DEPSMSEMSHSNGIYSNLSE) the composition is skewed to polar residues.

It is found in the nucleus. Transcription factor. Defines subclasses of motoneurons that segregate into columns in the spinal cord and select distinct axon pathways. Acts in conjunction with LIM-1, ISL-1 and ISL-2. This chain is LIM/homeobox protein Lhx3 (LHX3), found in Gallus gallus (Chicken).